The primary structure comprises 139 residues: Large ribosomal subunit protein uL16 (139 aa).

The protein belongs to the universal ribosomal protein uL16 family. As to quaternary structure, part of the 50S ribosomal subunit.

In terms of biological role, binds 23S rRNA and is also seen to make contacts with the A and possibly P site tRNAs. This chain is Large ribosomal subunit protein uL16, found in Gloeothece citriformis (strain PCC 7424) (Cyanothece sp. (strain PCC 7424)).